The chain runs to 84 residues: Small ribosomal subunit protein uS17 (84 aa).

It belongs to the universal ribosomal protein uS17 family. Part of the 30S ribosomal subunit.

In terms of biological role, one of the primary rRNA binding proteins, it binds specifically to the 5'-end of 16S ribosomal RNA. This chain is Small ribosomal subunit protein uS17, found in Salmonella typhi.